A 324-amino-acid polypeptide reads, in one-letter code: tRNA-modifying protein YgfZ (324 aa).

Residue Trp-186 coordinates folate.

This sequence belongs to the tRNA-modifying YgfZ family.

It is found in the cytoplasm. Its function is as follows. Folate-binding protein involved in regulating the level of ATP-DnaA and in the modification of some tRNAs. It is probably a key factor in regulatory networks that act via tRNA modification, such as initiation of chromosomal replication. The protein is tRNA-modifying protein YgfZ of Colwellia psychrerythraea (strain 34H / ATCC BAA-681) (Vibrio psychroerythus).